We begin with the raw amino-acid sequence, 281 residues long: Phosphatidylglycerol--prolipoprotein diacylglyceryl transferase (281 aa).

7 helical membrane passes run 11–31 (IIFT…VISF), 57–77 (LLYS…IIFY), 89–109 (VFYI…AIIV), 121–141 (ILEI…AGRI), 194–214 (PTQL…IYFF), 222–242 (GSIS…IEFF), and 255–275 (IITM…IIMY). R140 contacts a 1,2-diacyl-sn-glycero-3-phospho-(1'-sn-glycerol).

It belongs to the Lgt family.

The protein resides in the cell inner membrane. It catalyses the reaction L-cysteinyl-[prolipoprotein] + a 1,2-diacyl-sn-glycero-3-phospho-(1'-sn-glycerol) = an S-1,2-diacyl-sn-glyceryl-L-cysteinyl-[prolipoprotein] + sn-glycerol 1-phosphate + H(+). It participates in protein modification; lipoprotein biosynthesis (diacylglyceryl transfer). In terms of biological role, catalyzes the transfer of the diacylglyceryl group from phosphatidylglycerol to the sulfhydryl group of the N-terminal cysteine of a prolipoprotein, the first step in the formation of mature lipoproteins. This Buchnera aphidicola subsp. Acyrthosiphon pisum (strain 5A) protein is Phosphatidylglycerol--prolipoprotein diacylglyceryl transferase.